Here is a 65-residue protein sequence, read N- to C-terminus: MGNTSITIEFTSKFWPYFTLIHMILTLISLLIIITIMIAILNKLSEHKTFCNNTLELGQMHQINT.

At 1–20 (MGNTSITIEFTSKFWPYFTL) the chain is on the intravirion side. Residues 6 to 15 (ITIEFTSKFW) form an interaction with host BCAP31 region. Residues 21 to 44 (IHMILTLISLLIIITIMIAILNKL) form a helical; Signal-anchor for type II membrane protein membrane-spanning segment. An interaction with small-molecule inhibitor region spans residues 38-43 (IAILNK). Topologically, residues 45 to 65 (SEHKTFCNNTLELGQMHQINT) are virion surface. Asparagine 52 carries an N-linked (GlcNAc...) asparagine; by host glycan.

It belongs to the orthopneumovirus small hydrophobic protein family. In terms of assembly, homopentamer forming a funnel-like pore. Interacts with glycoprotein G; this interaction occurs on the surface of virion particles and infected cells. Interacts with host BCAP31 (via C-terminus); this interaction is direct. In terms of processing, four species of SH have been detected in infected cell cytoplasm: a 7.5 kDa non-glycosylated form (SH0), a 13-15 kDa form that contains one or two N-linked carbohydrate side chains of the high-mannose type (SHg), a 21-30 kDa polylactosaminoglycan-modified form of the protein (SHp), and the isoform generated by alternative translational initiation. Of these different forms, SH0 is by far the most abundant protein detected during virus infection. Post-translationally, tyrosine phosphorylated.

Its subcellular location is the virion membrane. It is found in the host cell membrane. The protein localises to the host Golgi apparatus membrane. The protein resides in the host endoplasmic reticulum membrane. Its activity is regulated as follows. Channel activity is inhibited by copper. Also inhibited by small-molecule pyronin B. In terms of biological role, viroporin that forms a homopentameric ion channel displaying low ion selectivity. May play a role in virus morphogenesis and pathogenicity at various stages of the viral life cycle. Accumulates at the membrane of the Golgi apparatus in infected cells and may facilitate virus release by modifying the secretory pathway. May enhance host membrane permeability and disrupt cellular ion homeostasis, which can be sensed as damage-associated molecular patterns/danger signals, triggering NLRP3 inflammasome activation and inflammatory immune response. Also inhibits host TNFA-mediated signaling pathway and may delay apoptosis, allowing time for the virus to replicate. This is Small hydrophobic protein from Homo sapiens (Human).